A 304-amino-acid chain; its full sequence is Putative S-adenosyl-L-methionine-dependent methyltransferase MAV_1058 (304 aa).

S-adenosyl-L-methionine contacts are provided by residues D128 and 157–158 (DL).

This sequence belongs to the UPF0677 family.

Its function is as follows. Exhibits S-adenosyl-L-methionine-dependent methyltransferase activity. This Mycobacterium avium (strain 104) protein is Putative S-adenosyl-L-methionine-dependent methyltransferase MAV_1058.